Here is a 428-residue protein sequence, read N- to C-terminus: 3-phosphoshikimate 1-carboxyvinyltransferase (428 aa).

Lysine 23, serine 24, and arginine 28 together coordinate 3-phosphoshikimate. Lysine 23 contacts phosphoenolpyruvate. The phosphoenolpyruvate site is built by glycine 92 and arginine 120. 3-phosphoshikimate contacts are provided by serine 165, glutamine 167, aspartate 312, and lysine 339. Phosphoenolpyruvate is bound at residue glutamine 167. Residue aspartate 312 is the Proton acceptor of the active site. Residues arginine 343 and arginine 384 each coordinate phosphoenolpyruvate.

This sequence belongs to the EPSP synthase family. As to quaternary structure, monomer.

The protein localises to the cytoplasm. It carries out the reaction 3-phosphoshikimate + phosphoenolpyruvate = 5-O-(1-carboxyvinyl)-3-phosphoshikimate + phosphate. The protein operates within metabolic intermediate biosynthesis; chorismate biosynthesis; chorismate from D-erythrose 4-phosphate and phosphoenolpyruvate: step 6/7. In terms of biological role, catalyzes the transfer of the enolpyruvyl moiety of phosphoenolpyruvate (PEP) to the 5-hydroxyl of shikimate-3-phosphate (S3P) to produce enolpyruvyl shikimate-3-phosphate and inorganic phosphate. The polypeptide is 3-phosphoshikimate 1-carboxyvinyltransferase (Sulfurimonas denitrificans (strain ATCC 33889 / DSM 1251) (Thiomicrospira denitrificans (strain ATCC 33889 / DSM 1251))).